The primary structure comprises 350 residues: MPVLHNRISNDALKAKMLAESEPRTTISFYKYFHIADPKVTRDALYQLFTALNVFGRVYLAHEGINAQISVPASNVETFRAQLYAFDPALEGLRLNIALDDDGKSFWVLRMKVRDRIVADGIDDPHFDASNVGEYLQAAEVNAMLDDPDALFIDMRNHYEYEVGHFENALEIPADTFREQLPKAVEMMQAHKDKKIVMYCTGGIRCEKASAWMKHNGFNKVWHIEGGVIEYARKAREQGLPVRFIGKNFVFDERMGERISDEIIAHCHQCGAPCDSHTNCKNDGCHLLFIQCPVCAEKYKGCCSEICCEESALPPDEQRRRRAGRENGNKIFNKSRGRLNTTLGIPDPTE.

The Rhodanese domain occupies 146 to 240 (DDPDALFIDM…YARKAREQGL (95 aa)). Catalysis depends on C200, which acts as the Cysteine persulfide intermediate.

This sequence belongs to the TrhO family.

The enzyme catalyses uridine(34) in tRNA + AH2 + O2 = 5-hydroxyuridine(34) in tRNA + A + H2O. Catalyzes oxygen-dependent 5-hydroxyuridine (ho5U) modification at position 34 in tRNAs, the first step in 5-carboxymethoxyuridine (cmo5U) biosynthesis. May be part of an alternate pathway, which is able to bypass cmo5U biogenesis in a subset of tRNAs under aerobic conditions. This chain is tRNA uridine(34) hydroxylase, found in Escherichia coli O45:K1 (strain S88 / ExPEC).